The chain runs to 195 residues: Molybdenum cofactor guanylyltransferase (195 aa).

GTP is bound by residues 12–14 (LAG), K25, N53, D70, and D100. D100 provides a ligand contact to Mg(2+).

This sequence belongs to the MobA family. As to quaternary structure, monomer. The cofactor is Mg(2+).

It is found in the cytoplasm. It catalyses the reaction Mo-molybdopterin + GTP + H(+) = Mo-molybdopterin guanine dinucleotide + diphosphate. In terms of biological role, transfers a GMP moiety from GTP to Mo-molybdopterin (Mo-MPT) cofactor (Moco or molybdenum cofactor) to form Mo-molybdopterin guanine dinucleotide (Mo-MGD) cofactor. In Vibrio campbellii (strain ATCC BAA-1116), this protein is Molybdenum cofactor guanylyltransferase.